A 231-amino-acid polypeptide reads, in one-letter code: Large ribosomal subunit protein uL1 (231 aa).

Belongs to the universal ribosomal protein uL1 family. Part of the 50S ribosomal subunit.

Its function is as follows. Binds directly to 23S rRNA. The L1 stalk is quite mobile in the ribosome, and is involved in E site tRNA release. Protein L1 is also a translational repressor protein, it controls the translation of the L11 operon by binding to its mRNA. This Azotobacter vinelandii (strain DJ / ATCC BAA-1303) protein is Large ribosomal subunit protein uL1.